An 86-amino-acid polypeptide reads, in one-letter code: Cardiotoxin homolog TA-ctx-like (86 aa).

An N-terminal signal peptide occupies residues 1–21; the sequence is MKTLLLTLVVLTIACLDLGYT. 4 disulfides stabilise this stretch: Cys-24-Cys-45, Cys-38-Cys-62, Cys-66-Cys-78, and Cys-79-Cys-84.

It belongs to the three-finger toxin family. Short-chain subfamily. Orphan group IX sub-subfamily. Expressed by the venom gland.

The protein localises to the secreted. The polypeptide is Cardiotoxin homolog TA-ctx-like (Bungarus multicinctus (Many-banded krait)).